Consider the following 346-residue polypeptide: Glucose-6-phosphatase 3 (346 aa).

Residues 1-24 (MESTLGAGIAMAEALQNQLPWLEN) lie on the Lumenal side of the membrane. A helical membrane pass occupies residues 25-45 (VWLWVTFLGDPKSLFLFYFPA). Over 46 to 54 (AYYASRRVG) the chain is Cytoplasmic. A helical membrane pass occupies residues 55–75 (IAVLWISLITEWLNLVFKWFL). At 76 to 108 (FGDRPFWWVHESGYYSQAPAQVHQFPSSCETGP) the chain is on the lumenal side. Arg79 provides a ligand contact to substrate. Residues 109 to 129 (GSPSGHCMITGAALWPIMTAV) traverse the membrane as a helical segment. His114 acts as the Proton donor in catalysis. Residues 130 to 140 (SSQMATRAHSR) lie on the Cytoplasmic side of the membrane. A helical membrane pass occupies residues 141 to 162 (WVRVIPSLAYCTFLLAVGLSRV). Arg161 is a binding site for substrate. Residues 163–167 (FLLAH) are Lumenal-facing. His167 (nucleophile) is an active-site residue. Residues 168–186 (FPHQVLAGLITGAVLGWLM) form a helical membrane-spanning segment. The Cytoplasmic segment spans residues 187–197 (TPQVPMERELS). A helical transmembrane segment spans residues 198-218 (FYGLTSLALLLGASLIYWTLF). At 219–254 (TLGLDLSWSINLASKWCERPEWVHLDSRPFASLSRD) the chain is on the lumenal side. Residues 255-273 (SGAALGLGIALHSPCYAQV) traverse the membrane as a helical segment. Residues 274–283 (RRAHLGYGQK) lie on the Cytoplasmic side of the membrane. A helical transmembrane segment spans residues 284 to 304 (LVCLVLAMGLLGPLNWLGYPP). Topologically, residues 305-307 (QIS) are lumenal. Residues 308-328 (LFYIFNFLKYTLWPCLVLALV) form a helical membrane-spanning segment. Over 329–346 (PWLVHMFSAQEAPPIRSS) the chain is Cytoplasmic.

Belongs to the glucose-6-phosphatase family.

The protein resides in the endoplasmic reticulum membrane. The enzyme catalyses D-glucose 6-phosphate + H2O = D-glucose + phosphate. The protein operates within carbohydrate biosynthesis; gluconeogenesis. Inhibited by vanadate. Functionally, hydrolyzes glucose-6-phosphate to glucose in the endoplasmic reticulum. May form with the glucose-6-phosphate transporter (SLC37A4/G6PT) a ubiquitously expressed complex responsible for glucose production through glycogenolysis and gluconeogenesis. Probably required for normal neutrophil function. In Bos taurus (Bovine), this protein is Glucose-6-phosphatase 3 (G6PC3).